Here is a 346-residue protein sequence, read N- to C-terminus: Protein FAF1 (346 aa).

Disordered regions lie at residues 22 to 120 (QFGS…LRSG) and 323 to 346 (KRDIARISGGERSGKFNGKKKSRR). Residues 31–65 (FEDKTKNIRTEVDTRDSSGDEIDNSDHGSDFKDGT) are compositionally biased toward basic and acidic residues. Acidic residues predominate over residues 72 to 85 (SDEDSGNETAEENN).

In terms of assembly, interacts with KRR1.

Its subcellular location is the nucleus. It localises to the nucleolus. Its function is as follows. Required for pre-rRNA processing and 40S ribosomal subunit assembly. Seems to act in the processing of 35S rRNA at the A(0), A(1), and A(2) cleavage sites. The protein is Protein FAF1 (FAF1) of Saccharomyces cerevisiae (strain ATCC 204508 / S288c) (Baker's yeast).